The sequence spans 249 residues: 3-deoxy-manno-octulosonate cytidylyltransferase (249 aa).

Belongs to the KdsB family.

It is found in the cytoplasm. It carries out the reaction 3-deoxy-alpha-D-manno-oct-2-ulosonate + CTP = CMP-3-deoxy-beta-D-manno-octulosonate + diphosphate. It functions in the pathway nucleotide-sugar biosynthesis; CMP-3-deoxy-D-manno-octulosonate biosynthesis; CMP-3-deoxy-D-manno-octulosonate from 3-deoxy-D-manno-octulosonate and CTP: step 1/1. The protein operates within bacterial outer membrane biogenesis; lipopolysaccharide biosynthesis. Its function is as follows. Activates KDO (a required 8-carbon sugar) for incorporation into bacterial lipopolysaccharide in Gram-negative bacteria. The chain is 3-deoxy-manno-octulosonate cytidylyltransferase from Serratia proteamaculans (strain 568).